We begin with the raw amino-acid sequence, 133 residues long: Protein NrdI (133 aa).

Belongs to the NrdI family.

Its function is as follows. Probably involved in ribonucleotide reductase function. This Escherichia coli O17:K52:H18 (strain UMN026 / ExPEC) protein is Protein NrdI.